The chain runs to 366 residues: Aminomethyltransferase (366 aa).

The protein belongs to the GcvT family. As to quaternary structure, the glycine cleavage system is composed of four proteins: P, T, L and H.

It carries out the reaction N(6)-[(R)-S(8)-aminomethyldihydrolipoyl]-L-lysyl-[protein] + (6S)-5,6,7,8-tetrahydrofolate = N(6)-[(R)-dihydrolipoyl]-L-lysyl-[protein] + (6R)-5,10-methylene-5,6,7,8-tetrahydrofolate + NH4(+). The glycine cleavage system catalyzes the degradation of glycine. The sequence is that of Aminomethyltransferase from Bordetella avium (strain 197N).